The following is a 154-amino-acid chain: Transcriptional repressor NrdR (154 aa).

Residues 3–34 (CPTCKYNGTRVVDSRPADDGNSIRRRRECEKC) fold into a zinc finger. The region spanning 49 to 139 (LIVVKKDGAR…VYRQFKDISV (91 aa)) is the ATP-cone domain.

This sequence belongs to the NrdR family. The cofactor is Zn(2+).

Negatively regulates transcription of bacterial ribonucleotide reductase nrd genes and operons by binding to NrdR-boxes. This chain is Transcriptional repressor NrdR, found in Listeria innocua serovar 6a (strain ATCC BAA-680 / CLIP 11262).